A 719-amino-acid polypeptide reads, in one-letter code: ATP-dependent RNA helicase p62 (719 aa).

The tract at residues 94 to 234 (AQSQRAFRDS…GSQDLPMRPV (141 aa)) is disordered. 2 stretches are compositionally biased toward basic and acidic residues: residues 99–108 (AFRDSSKPDS) and 137–171 (EEIK…DRRG). The segment covering 172-188 (GGGGGNRFGGGGGGGDY) has biased composition (gly residues). The segment covering 194 to 205 (GRVEKRRDDRGG) has biased composition (basic and acidic residues). The span at 206–226 (GNRFGGGGGFGDRRGGGGGGS) shows a compositional bias: gly residues. Residues 281–309 (QDFSEVHLPDYVMKEIRRQGYKAPTAIQA) carry the Q motif motif. A Helicase ATP-binding domain is found at 312–487 (WPIAMSGSNF…EDFLGNYIQI (176 aa)). 325–332 (AKTGSGKT) provides a ligand contact to ATP. Positions 435–438 (DEAD) match the DEAD box motif. Residues 519–664 (LLSDIYDTSE…EINPALENLA (146 aa)) form the Helicase C-terminal domain. Positions 689–719 (GGGFKKGSLSNGRGFGGGGGGGGEGRHSRFD) are disordered. A compositionally biased stretch (gly residues) spans 701-711 (RGFGGGGGGGG).

The protein belongs to the DEAD box helicase family. DDX5/DBP2 subfamily. In terms of assembly, interacts with Fmr1 to form the RNA-induced silencing complex (RISC), a ribonucleoprotein (RNP) complex involved in translation regulation, other components of the complex are RpL5, RpL11, AGO2 and Dcr-1.

It localises to the nucleus. Its subcellular location is the nucleolus. It is found in the cytoplasm. The protein resides in the cytosol. The enzyme catalyses ATP + H2O = ADP + phosphate + H(+). Its function is as follows. As an RNA helicase, unwinds RNA and alters RNA structures through ATP binding and hydrolysis. Involved in multiple cellular processes, including pre-mRNA splicing, alternative splicing, rRNA processing and miRNA processing, as well as transcription regulation. Plays a role in innate immunity. Specifically restricts bunyavirus infection, including Rift Valley fever virus (RVFV) or La Crosse virus (LACV), but not vesicular stomatitis virus (VSV), in an interferon- and DROSHA-independent manner. The protein is ATP-dependent RNA helicase p62 (Rm62) of Drosophila melanogaster (Fruit fly).